Reading from the N-terminus, the 532-residue chain is MLLLWLLLLLLLLVPLLAILWQQRSRGARPCWLISLQHRVAWGMLGWAAAWQQWRLDRSTLNVGQSQQQALMWCLKKAQGSCCLPREDTDMRTFRNHLPLTQTSHTQEQESEETLPSPASPQYHGDASLQATLLGLITLNKAYPEALAPGSTACVTPTSPWPCSVPWLGHALGRVSPDGAKDPRTLLLEALISPGLRVLEARTAVELLDVFVGLEADGEELAEAIAAGILGTLLPKRAAELKEALEQGPRGLARRLWPKLQVVVTLDSGGQAEAVAALRVLWCQGLAFFSPAYAASGGVVALNLWPERPQGSYLLPPGVPFIELLPIKEGTQEEAASTLLLTDAQREKEYELVLTNHTSLTRCRLGDVVQVVGTYNQCPVVRFTCRLGQTLNVRGEVTDETVFSVALAQAVGQWPGAKLLDHVCVESRVLDSCEGSAPHYEVFVELRGLRNLSEENRDKLDNCLQEASAQYKSLRFRGSVGPAKVHLVRPGSFRVLREALAAFSSSSCRPPEMPRVIRLRHLAQLLQKRVIS.

A signal peptide spans 1–18 (MLLLWLLLLLLLLVPLLA). The segment at 100–123 (LTQTSHTQEQESEETLPSPASPQY) is disordered. 2 N-linked (GlcNAc...) asparagine glycosylation sites follow: Asn356 and Asn451.

The protein belongs to the GH3 family. Highly expressed in mammary tissues from mature virgins and at day 13 of pregnancy, and at lower level during lactation. Expressed at intermediate level in liver. Expressed at lower level in kidney, heart and brain.

It is found in the endoplasmic reticulum. The protein resides in the nucleus envelope. This Mus musculus (Mouse) protein is GH3 domain-containing protein (Ghdc).